The following is a 294-amino-acid chain: 33 kDa chaperonin (294 aa).

2 disulfide bridges follow: cysteine 236–cysteine 238 and cysteine 269–cysteine 272.

Belongs to the HSP33 family. In terms of processing, under oxidizing conditions two disulfide bonds are formed involving the reactive cysteines. Under reducing conditions zinc is bound to the reactive cysteines and the protein is inactive.

Its subcellular location is the cytoplasm. Its function is as follows. Redox regulated molecular chaperone. Protects both thermally unfolding and oxidatively damaged proteins from irreversible aggregation. Plays an important role in the bacterial defense system toward oxidative stress. The chain is 33 kDa chaperonin from Desulforamulus reducens (strain ATCC BAA-1160 / DSM 100696 / MI-1) (Desulfotomaculum reducens).